We begin with the raw amino-acid sequence, 1232 residues long: Pyruvate:ferredoxin oxidoreductase (1232 aa).

Position 31 (Thr-31) interacts with pyruvate. Glu-64 contacts thiamine diphosphate. Arg-114 is a pyruvate binding site. CoA-binding positions include 427–431 (ADGTV), Lys-459, Asn-560, and Asn-602. 4Fe-4S ferredoxin-type domains are found at residues 680–709 (NVPQWVPENCIQCNQCAFVCPHSAILPVLA) and 736–767 (FRIQINTLDCMGCGNCADICPPKEKALVMQPL). [4Fe-4S] cluster contacts are provided by Cys-689, Cys-692, Cys-695, Cys-699, Cys-745, Cys-748, Cys-751, Cys-755, Cys-812, and Cys-815. Residues Glu-817, Cys-840, and 962–965 (GDGW) contribute to the thiamine diphosphate site. Residue Cys-840 participates in [4Fe-4S] cluster binding. Residue Asp-963 participates in Mg(2+) binding. The Ca(2+) site is built by Asp-983 and Asn-985. Mg(2+)-binding residues include Thr-991 and Val-993. Residue 991-996 (TEVYSN) coordinates thiamine diphosphate. Residues Ala-1056, Phe-1059, Gly-1061, and Ser-1063 each coordinate Ca(2+). Cys-1071 contacts [4Fe-4S] cluster. Cys-1195 and Cys-1212 are oxidised to a cystine. The tract at residues 1197–1232 (RDDTPMMARPDSGEACDQNRAGTSEQQGDLSKRTKK) is disordered. Residues 1216–1225 (RAGTSEQQGD) show a composition bias toward polar residues.

Belongs to the pyruvate:ferredoxin/flavodoxin oxidoreductase family. In terms of assembly, homodimer. [4Fe-4S] cluster is required as a cofactor. Requires thiamine diphosphate as cofactor. The cofactor is Mg(2+).

It localises to the cytoplasm. It catalyses the reaction 2 oxidized [2Fe-2S]-[ferredoxin] + pyruvate + CoA = 2 reduced [2Fe-2S]-[ferredoxin] + acetyl-CoA + CO2 + H(+). Functionally, catalyzes the ferredoxin-dependent oxidative decarboxylation of pyruvate. Required for the transfer of electrons from pyruvate to ferredoxin. Ferredoxin I and ferredoxin II, which are single 4Fe-4S cluster ferredoxins are the most effective electron carriers of POR. In Desulfocurvibacter africanus (Desulfovibrio africanus), this protein is Pyruvate:ferredoxin oxidoreductase.